The primary structure comprises 275 residues: Putative protein A464R (275 aa).

The RNase III domain occupies 51 to 175 (KEDVEYLIGM…LMGAIYFDLG (125 aa)). Residues 201-269 (NYKDRLLKHT…SKIALHTMGV (69 aa)) enclose the DRBM domain.

Belongs to the ribonuclease III family.

The protein is Putative protein A464R of Chlorella (PBCV-1).